The following is a 156-amino-acid chain: MGRQVKCPYCETKLDKDSAIPYKKRYYHEKCFNTWKQESDHRKELIQYICNLYGLTSPTGMMLKQIKEFQEEYGYKLKGIELALRYFYETLDNQPREGDGIGIVPFVYDEAKRHYIRQKAIRKSAEDPKNHKREEITLVIKKGMRKKRGLVDISML.

This Bacillus subtilis (strain 168) protein is SPbeta prophage-derived uncharacterized protein YorH (yorH).